The following is a 375-amino-acid chain: MGGGGRGRTSQKPLMERVSVDPPFTVSDLKQAIPPHCFKRSVIRSSYYIVHDAIIAYIFYFLADKYIPILPAPLAYLAWPLYWFCQASILTGLWVIGHECGHHAFSDYQWVDDTVGFILHSFLMTPYFSWKYSHRNHHANTNSLDNDEVYIPKSKAKVALYYKVLNHPPGRLLIMFITFTLGFPLYLFTNISGKKYERFANHFDPMSPIFKERERFQVLLSDLGLLAVLYGVKLAVAAKGAAWVTCIYGIPVLGVFIFFDIITYLHHTHLSLPHYDSSEWNWLRGALSTIDRDFGFLNSVLHDVTHTHVMHHLFSYIPHYHAKEARDAINTVLGDFYKIDRTPILKAMWREAKECIFIEPEKGRGSKGVYWYNKF.

The next 2 membrane-spanning stretches (helical) occupy residues 54-74 (IIAY…PAPL) and 77-97 (LAWP…WVIG). Positions 98 to 102 (HECGH) match the Histidine box-1 motif. A helical transmembrane segment spans residues 110-130 (WVDDTVGFILHSFLMTPYFSW). The Histidine box-2 signature appears at 134–138 (HRNHH). A run of 3 helical transmembrane segments spans residues 172–192 (LLIM…TNIS), 218–238 (VLLS…AVAA), and 242–262 (AWVT…FDII). Residues 308 to 312 (HVMHH) carry the Histidine box-3 motif.

It belongs to the fatty acid desaturase type 1 family. Requires Fe cation as cofactor. Seed.

The protein resides in the membrane. It carries out the reaction a (9Z,12Z)-octadecadienoyl-containing glycerolipid + 2 Fe(II)-[cytochrome b5] + O2 + 2 H(+) = a (9Z)-octadec-9-en-12-ynoyl-containing glycerolipid + 2 Fe(III)-[cytochrome b5] + 2 H2O. It functions in the pathway lipid metabolism; polyunsaturated fatty acid biosynthesis. Changes the delta-12 double bond of linoleic acid into a triple bond in the biosynthesis of crepenynic acid. The protein is Delta(12) fatty acid dehydrogenase of Crepis alpina (Hawksbeard).